A 338-amino-acid polypeptide reads, in one-letter code: Ketol-acid reductoisomerase (NADP(+)) (338 aa).

Residues Met-1 to Thr-181 form the KARI N-terminal Rossmann domain. Residues Tyr-24 to Gln-27, Arg-47, and Ser-52 each bind NADP(+). His-107 is a catalytic residue. Gly-133 lines the NADP(+) pocket. Positions Asn-182–Ile-327 constitute a KARI C-terminal knotted domain. The Mg(2+) site is built by Asp-190, Glu-194, Glu-226, and Glu-230. Ser-251 contributes to the substrate binding site.

It belongs to the ketol-acid reductoisomerase family. Mg(2+) serves as cofactor.

It carries out the reaction (2R)-2,3-dihydroxy-3-methylbutanoate + NADP(+) = (2S)-2-acetolactate + NADPH + H(+). It catalyses the reaction (2R,3R)-2,3-dihydroxy-3-methylpentanoate + NADP(+) = (S)-2-ethyl-2-hydroxy-3-oxobutanoate + NADPH + H(+). It functions in the pathway amino-acid biosynthesis; L-isoleucine biosynthesis; L-isoleucine from 2-oxobutanoate: step 2/4. The protein operates within amino-acid biosynthesis; L-valine biosynthesis; L-valine from pyruvate: step 2/4. In terms of biological role, involved in the biosynthesis of branched-chain amino acids (BCAA). Catalyzes an alkyl-migration followed by a ketol-acid reduction of (S)-2-acetolactate (S2AL) to yield (R)-2,3-dihydroxy-isovalerate. In the isomerase reaction, S2AL is rearranged via a Mg-dependent methyl migration to produce 3-hydroxy-3-methyl-2-ketobutyrate (HMKB). In the reductase reaction, this 2-ketoacid undergoes a metal-dependent reduction by NADPH to yield (R)-2,3-dihydroxy-isovalerate. The polypeptide is Ketol-acid reductoisomerase (NADP(+)) (Acidovorax ebreus (strain TPSY) (Diaphorobacter sp. (strain TPSY))).